We begin with the raw amino-acid sequence, 179 residues long: MIP18 family protein C144.16 (179 aa).

Residues 1–26 (MSANLQNENPEVKELNQLPSRVEEEE) are disordered.

Belongs to the MIP18 family.

Functionally, may play a role in chromosome segregation through establishment of sister chromatid cohesion. This chain is MIP18 family protein C144.16, found in Schizosaccharomyces pombe (strain 972 / ATCC 24843) (Fission yeast).